A 238-amino-acid chain; its full sequence is LexA repressor (238 aa).

A DNA-binding region (H-T-H motif) is located at residues 26-46 (FDEMKDALDLASKSGIHRLIT). Active-site for autocatalytic cleavage activity residues include S158 and K196.

The protein belongs to the peptidase S24 family. Homodimer.

The enzyme catalyses Hydrolysis of Ala-|-Gly bond in repressor LexA.. In terms of biological role, represses a number of genes involved in the response to DNA damage (SOS response), including recA and lexA. In the presence of single-stranded DNA, RecA interacts with LexA causing an autocatalytic cleavage which disrupts the DNA-binding part of LexA, leading to derepression of the SOS regulon and eventually DNA repair. This chain is LexA repressor, found in Sinorhizobium medicae (strain WSM419) (Ensifer medicae).